A 674-amino-acid chain; its full sequence is Protein kinase C delta type (674 aa).

A C2 domain is found at 1-106 (MAPFLRISFN…KNNGKAEFWL (106 aa)). Residues T43 and T50 each carry the phosphothreonine modification. Position 64 is a phosphotyrosine (Y64). S130 is modified (phosphoserine). At T141 the chain carries Phosphothreonine. Y155 bears the Phosphotyrosine mark. A Phorbol-ester/DAG-type 1 zinc finger spans residues 158–208 (NHEFIATFFGQPTFCSVCKEFVWGLNKQGYKCRQCNAAIHKKCIDKIIGRC). Position 218 is a phosphothreonine (T218). Residues 230–280 (PHRFKVYNYMSPTFCDHCGSLLWGLVKQGLKCEDCGMNVHHKCREKVANLC) form a Phorbol-ester/DAG-type 2 zinc finger. S299 is subject to Phosphoserine; by autocatalysis. Phosphotyrosine; by SRC occurs at positions 311 and 332. Residues 347 to 601 (FTFQKVLGKG…TGNIRIHPFF (255 aa)) form the Protein kinase domain. 353 to 361 (LGKGSFGKV) is a binding site for ATP. Y372 is modified (phosphotyrosine). K376 contacts ATP. T449 carries the phosphothreonine modification. D471 acts as the Proton acceptor in catalysis. At S504 the chain carries Phosphoserine. Residue T505 is modified to Phosphothreonine; by autocatalysis. Residue Y565 is modified to Phosphotyrosine. Residues 602-673 (KTINWSLLEK…VNPKFEQFLD (72 aa)) form the AGC-kinase C-terminal domain. A phosphoserine mark is found at S643, S652, and S662.

Belongs to the protein kinase superfamily. AGC Ser/Thr protein kinase family. PKC subfamily. In terms of assembly, interacts with PDPK1 (via N-terminal region). Interacts with RAD9A. Interacts with CDCP1. Interacts with MUC1. Interacts with VASP. Interacts with CAVIN3. Interacts with PRKD2 (via N-terminus and zing-finger domain 1 and 2) in response to oxidative stress; the interaction is independent of PRKD2 tyrosine phosphorylation. Interacts with PLSC3; interaction is enhanced by UV irradiation. In terms of processing, autophosphorylated and/or phosphorylated at Thr-505, within the activation loop; phosphorylation at Thr-505 is not a prerequisite for enzymatic activity. Autophosphorylated at Ser-299. Upon TNFSF10/TRAIL treatment, phosphorylated at Tyr-155; phosphorylation is required for its translocation to the endoplasmic reticulum and cleavage by caspase-3. Phosphorylated at Tyr-311, Tyr-332 and Tyr-565; phosphorylation of Tyr-311 and Tyr-565 following thrombin or zymosan stimulation potentiates its kinase activity. Phosphorylated by protein kinase PDPK1; phosphorylation is inhibited by the apoptotic C-terminal cleavage product of PKN2. Phosphorylated at Tyr-311 through a SYK and SRC mechanism downstream of C-type lectin receptors activation, promoting its activation. Proteolytically cleaved into a catalytic subunit and a regulatory subunit by caspase-3 during apoptosis which results in kinase activation. In terms of tissue distribution, isoform 1 is highly expressed in developing pro- and pre-B-cells and moderately in mature T-cells. Isoform 2 is highly expressed in testis and ovary and at a lower level in thymocytes, brain and kidney.

Its subcellular location is the cytoplasm. The protein localises to the perinuclear region. The protein resides in the nucleus. It localises to the cell membrane. It is found in the mitochondrion. Its subcellular location is the endomembrane system. The enzyme catalyses L-seryl-[protein] + ATP = O-phospho-L-seryl-[protein] + ADP + H(+). The catalysed reaction is L-threonyl-[protein] + ATP = O-phospho-L-threonyl-[protein] + ADP + H(+). It carries out the reaction L-tyrosyl-[protein] + ATP = O-phospho-L-tyrosyl-[protein] + ADP + H(+). Its activity is regulated as follows. Novel PKCs (PRKCD, PRKCE, PRKCH and PRKCQ) are calcium-insensitive, but activated by diacylglycerol (DAG) and phosphatidylserine. Three specific sites; Thr-505 (activation loop of the kinase domain), Ser-643 (turn motif) and Ser-662 (hydrophobic region), need to be phosphorylated for its full activation. Activated by caspase-3 (CASP3) cleavage during apoptosis. After cleavage, the pseudosubstrate motif in the regulatory subunit is released from the substrate recognition site of the catalytic subunit, which enables PRKCD to become constitutively activated. The catalytic subunit which displays properties of a sphingosine-dependent protein kinase is activated by D-erythro-sphingosine (Sph) or N,N-dimethyl-D-erythrosphingosine (DMS) or N,N,N-trimethyl-D-erythrosphingosine (TMS), but not by ceramide or Sph-1-P and is strongly inhibited by phosphatidylserine. Calcium-independent, phospholipid- and diacylglycerol (DAG)-dependent serine/threonine-protein kinase that plays contrasting roles in cell death and cell survival by functioning as a pro-apoptotic protein during DNA damage-induced apoptosis, but acting as an anti-apoptotic protein during cytokine receptor-initiated cell death, is involved in tumor suppression, is required for oxygen radical production by NADPH oxidase and acts as a positive or negative regulator in platelet functional responses. Negatively regulates B cell proliferation and also has an important function in self-antigen induced B cell tolerance induction. Upon DNA damage, activates the promoter of the death-promoting transcription factor BCLAF1/Btf to trigger BCLAF1-mediated p53/TP53 gene transcription and apoptosis. In response to oxidative stress, interact with and activate CHUK/IKKA in the nucleus, causing the phosphorylation of p53/TP53. In the case of ER stress or DNA damage-induced apoptosis, can form a complex with the tyrosine-protein kinase ABL1 which trigger apoptosis independently of p53/TP53. In cytosol can trigger apoptosis by activating MAPK11 or MAPK14, inhibiting AKT1 and decreasing the level of X-linked inhibitor of apoptosis protein (XIAP), whereas in nucleus induces apoptosis via the activation of MAPK8 or MAPK9. Upon ionizing radiation treatment, is required for the activation of the apoptosis regulators BAX and BAK, which trigger the mitochondrial cell death pathway. Can phosphorylate MCL1 and target it for degradation which is sufficient to trigger for BAX activation and apoptosis. Is required for the control of cell cycle progression both at G1/S and G2/M phases. Mediates phorbol 12-myristate 13-acetate (PMA)-induced inhibition of cell cycle progression at G1/S phase by up-regulating the CDK inhibitor CDKN1A/p21 and inhibiting the cyclin CCNA2 promoter activity. In response to UV irradiation can phosphorylate CDK1, which is important for the G2/M DNA damage checkpoint activation. Can protect glioma cells from the apoptosis induced by TNFSF10/TRAIL, probably by inducing increased phosphorylation and subsequent activation of AKT1. Can also act as tumor suppressor upon mitogenic stimulation with PMA or TPA. In N-formyl-methionyl-leucyl-phenylalanine (fMLP)-treated cells, is required for NCF1 (p47-phox) phosphorylation and activation of NADPH oxidase activity, and regulates TNF-elicited superoxide anion production in neutrophils, by direct phosphorylation and activation of NCF1 or indirectly through MAPK1/3 (ERK1/2) signaling pathways. Involved in antifungal immunity by mediating phosphorylation and activation of CARD9 downstream of C-type lectin receptors activation, promoting interaction between CARD9 and BCL10, followed by activation of NF-kappa-B and MAP kinase p38 pathways. May also play a role in the regulation of NADPH oxidase activity in eosinophil after stimulation with IL5, leukotriene B4 or PMA. In collagen-induced platelet aggregation, acts a negative regulator of filopodia formation and actin polymerization by interacting with and negatively regulating VASP phosphorylation. Downstream of PAR1, PAR4 and CD36/GP4 receptors, regulates differentially platelet dense granule secretion; acts as a positive regulator in PAR-mediated granule secretion, whereas it negatively regulates CD36/GP4-mediated granule release. Phosphorylates MUC1 in the C-terminal and regulates the interaction between MUC1 and beta-catenin. The catalytic subunit phosphorylates 14-3-3 proteins (YWHAB, YWHAZ and YWHAH) in a sphingosine-dependent fashion. Phosphorylates ELAVL1 in response to angiotensin-2 treatment. Phosphorylates mitochondrial phospholipid scramblase 3 (PLSCR3), resulting in increased cardiolipin expression on the mitochondrial outer membrane which facilitates apoptosis. Phosphorylates SMPD1 which induces SMPD1 secretion. The sequence is that of Protein kinase C delta type from Mus musculus (Mouse).